A 252-amino-acid polypeptide reads, in one-letter code: MKNEIAAVVFFFTRLVRKHDKLKKEAVERFAEKLTQILQEKYKNHWYPEKPSKGQAYRCIRVNKFQRVDPDVLKACENSCILYSDLGLPKELTLWVDPCEVCCRYGEKNNAFIVASFENEDENKDEISKKVSRALDKVTSDYHSGSSSSDEDTSKEVDVKPSSVAATPSPVYQISELIFPPLPMWHPLPRKKPGMYRGSGHQTHYPPPVPFAYPNPGRKNKPFRPIPVTWVPPPGMHCDRNHWINPHMLAPH.

Positions 138–163 (VTSDYHSGSSSSDEDTSKEVDVKPSS) are disordered.

Belongs to the BTG family. In terms of tissue distribution, ubiquitous.

Overexpression impairs serum-induced cell cycle progression from the G0/G1 to S phase. This Mus musculus (Mouse) protein is Protein BTG3 (Btg3).